A 676-amino-acid polypeptide reads, in one-letter code: DNA ligase (676 aa).

NAD(+)-binding positions include 34–38 (DAEYD), 84–85 (SL), and Glu-116. Lys-118 acts as the N6-AMP-lysine intermediate in catalysis. Arg-139, Glu-174, Lys-294, and Lys-318 together coordinate NAD(+). Positions 412, 415, 428, and 433 each coordinate Zn(2+). The 88-residue stretch at 589-676 (KGGEALKGLT…RTGKKAEELV (88 aa)) folds into the BRCT domain.

It belongs to the NAD-dependent DNA ligase family. LigA subfamily. Mg(2+) is required as a cofactor. It depends on Mn(2+) as a cofactor.

The enzyme catalyses NAD(+) + (deoxyribonucleotide)n-3'-hydroxyl + 5'-phospho-(deoxyribonucleotide)m = (deoxyribonucleotide)n+m + AMP + beta-nicotinamide D-nucleotide.. DNA ligase that catalyzes the formation of phosphodiester linkages between 5'-phosphoryl and 3'-hydroxyl groups in double-stranded DNA using NAD as a coenzyme and as the energy source for the reaction. It is essential for DNA replication and repair of damaged DNA. The sequence is that of DNA ligase from Thermus thermophilus (strain ATCC 27634 / DSM 579 / HB8).